Here is a 124-residue protein sequence, read N- to C-terminus: V-type proton ATPase subunit F 1 (124 aa).

The protein belongs to the V-ATPase F subunit family. In terms of assembly, V-ATPase is a heteromultimeric enzyme made up of two complexes: the ATP-hydrolytic V1 complex and the proton translocation V0 complex. The V1 complex consists of three catalytic AB heterodimers that form a heterohexamer, three peripheral stalks each consisting of EG heterodimers, one central rotor including subunits D and F, and the regulatory subunits C and H. The proton translocation complex V0 consists of the proton transport subunit a, a ring of proteolipid subunits c9c'', rotary subunit d, subunits e and f, and the accessory subunits VhaAC45 and ATP6AP2.

Its function is as follows. Subunit of the V1 complex of vacuolar(H+)-ATPase (V-ATPase), a multisubunit enzyme composed of a peripheral complex (V1) that hydrolyzes ATP and a membrane integral complex (V0) that translocates protons. V-ATPase is responsible for acidifying and maintaining the pH of intracellular compartments and in some cell types, is targeted to the plasma membrane, where it is responsible for acidifying the extracellular environment. This Drosophila pseudoobscura pseudoobscura (Fruit fly) protein is V-type proton ATPase subunit F 1 (Vha14).